The primary structure comprises 498 residues: AP2-like ethylene-responsive transcription factor AIL7 (498 aa).

Polar residues predominate over residues Thr186 to Asn195. The disordered stretch occupies residues Thr186–Lys220. Residues Ser209–Lys220 are compositionally biased toward basic and acidic residues. DNA-binding regions (AP2/ERF) lie at residues Ile231–Pro297 and Ile333–Glu391. A compositionally biased stretch (low complexity) spans Glu422–Ser451. A disordered region spans residues Glu422–Ile452.

This sequence belongs to the AP2/ERF transcription factor family. AP2 subfamily. In terms of assembly, interacts with HDG2, and possibly with HDG3, HDG7, ANL2, ATML1 and PDF2. In terms of tissue distribution, expressed in roots, seedlings, inflorescence, and siliques. Also detected at low levels in leaves.

The protein resides in the nucleus. In terms of biological role, probably acts as a transcriptional activator. Binds to the GCC-box pathogenesis-related promoter element. May be involved in the regulation of gene expression by stress factors and by components of stress signal transduction pathways. This is AP2-like ethylene-responsive transcription factor AIL7 from Arabidopsis thaliana (Mouse-ear cress).